We begin with the raw amino-acid sequence, 338 residues long: Limbic system-associated membrane protein (338 aa).

An N-terminal signal peptide occupies residues 1 to 28 (MVGRVQPDRKQLPLVLLRLLCLLPTGLP). 3 consecutive Ig-like C2-type domains span residues 29–122 (VRSV…PKTS), 132–214 (PKIS…VKVT), and 219–304 (PTIT…ASLV). Asn40 and Asn66 each carry an N-linked (GlcNAc...) asparagine glycan. Cys53 and Cys111 are joined by a disulfide. At Tyr94 the chain carries Phosphotyrosine. 2 N-linked (GlcNAc...) asparagine glycosylation sites follow: Asn136 and Asn148. Intrachain disulfides connect Cys153–Cys197 and Cys239–Cys290. N-linked (GlcNAc...) asparagine glycosylation is found at Asn279, Asn287, and Asn300. The GPI-anchor amidated asparagine; alternate moiety is linked to residue Asn315. N-linked (GlcNAc...) asparagine; alternate glycosylation is present at Asn315. Residues 316–338 (GSISLAVPLWLLAASLFCLLSKC) constitute a propeptide, removed in mature form.

Belongs to the immunoglobulin superfamily. IgLON family. Expressed mostly by neurons comprising limbic-associated cortical and subcortical regions that function in cognition, emotion, memory, and learning.

It is found in the cell membrane. Functionally, mediates selective neuronal growth and axon targeting. Contributes to the guidance of developing axons and remodeling of mature circuits in the limbic system. Essential for normal growth of the hippocampal mossy fiber projection. This chain is Limbic system-associated membrane protein (Lsamp), found in Rattus norvegicus (Rat).